The following is a 350-amino-acid chain: tRNA N6-adenosine threonylcarbamoyltransferase (350 aa).

Positions 109 and 113 each coordinate Fe cation. Substrate is bound by residues 136–140 (TVSGG), aspartate 169, glycine 182, aspartate 186, and asparagine 284. Residue aspartate 312 participates in Fe cation binding.

It belongs to the KAE1 / TsaD family. Fe(2+) is required as a cofactor.

The protein resides in the cytoplasm. It catalyses the reaction L-threonylcarbamoyladenylate + adenosine(37) in tRNA = N(6)-L-threonylcarbamoyladenosine(37) in tRNA + AMP + H(+). In terms of biological role, required for the formation of a threonylcarbamoyl group on adenosine at position 37 (t(6)A37) in tRNAs that read codons beginning with adenine. Is involved in the transfer of the threonylcarbamoyl moiety of threonylcarbamoyl-AMP (TC-AMP) to the N6 group of A37, together with TsaE and TsaB. TsaD likely plays a direct catalytic role in this reaction. This is tRNA N6-adenosine threonylcarbamoyltransferase from Pelodictyon phaeoclathratiforme (strain DSM 5477 / BU-1).